Here is a 482-residue protein sequence, read N- to C-terminus: Membrane-bound lytic murein transglycosylase F (482 aa).

Residues 1-18 form the signal peptide; sequence MKGLFLRIITALALLFWA. A non-LT domain region spans residues 19-267; that stretch reads IDMVFPWQFL…NLKEKYLGHI (249 aa). The interval 268-482 is LT domain; sequence SQFDYVDTRS…NLEEIKENKD (215 aa). Residue Glu-312 is part of the active site. A compositionally biased stretch (polar residues) spans 457-470; sequence ENQTTNDNANNESA. The segment at 457–482 is disordered; that stretch reads ENQTTNDNANNESAVKNLEEIKENKD. Basic and acidic residues predominate over residues 473 to 482; the sequence is NLEEIKENKD.

The protein in the N-terminal section; belongs to the bacterial solute-binding protein 3 family. In the C-terminal section; belongs to the transglycosylase Slt family.

The protein resides in the cell outer membrane. The catalysed reaction is Exolytic cleavage of the (1-&gt;4)-beta-glycosidic linkage between N-acetylmuramic acid (MurNAc) and N-acetylglucosamine (GlcNAc) residues in peptidoglycan, from either the reducing or the non-reducing ends of the peptidoglycan chains, with concomitant formation of a 1,6-anhydrobond in the MurNAc residue.. Murein-degrading enzyme that degrades murein glycan strands and insoluble, high-molecular weight murein sacculi, with the concomitant formation of a 1,6-anhydromuramoyl product. Lytic transglycosylases (LTs) play an integral role in the metabolism of the peptidoglycan (PG) sacculus. Their lytic action creates space within the PG sacculus to allow for its expansion as well as for the insertion of various structures such as secretion systems and flagella. The polypeptide is Membrane-bound lytic murein transglycosylase F (Haemophilus influenzae (strain 86-028NP)).